Reading from the N-terminus, the 800-residue chain is Signaling protein YkoW (800 aa).

7 helical membrane passes run 5–27 (VTYNTTLICLSILIACTASYISL), 44–66 (WLIGGSLIMGFGIWSMHFVGMMA), 76–98 (EFMPLMAAIGASVSGSFVSLYFV), 103–125 (LTYYRLLTGSVVLGASIASMHYI), 135–157 (IIYEPILFTVSIIIAIAASFVSL), 178–200 (VSSIVMGIGISGMHYTGMLAATF), and 215–237 (TFHWSIFVTLIIFCIQTLLLFSS). Residues 7-201 (YNTTLICLSI…YTGMLAATFH (195 aa)) form the MHYT domain. The region spanning 255 to 319 (QRFQSLIVHN…FEQVKKDKQA (65 aa)) is the PAS domain. The GGDEF domain maps to 402–536 (YNTVVFFLDL…NKSKYRYYSF (135 aa)). The EAL domain maps to 545-798 (KLNQEMVLRE…QFEQFIIEQP (254 aa)).

The protein localises to the cell membrane. In terms of biological role, probable signaling protein whose physiological role is not yet known. The sequence is that of Signaling protein YkoW (ykoW) from Bacillus subtilis (strain 168).